The sequence spans 652 residues: Regulator of DNA class I crossover intermediates 1 (652 aa).

The binds DNA containing a D-loop DNA-binding region spans 1–231 (MNWVGGSRSR…TLFERLNSLG (231 aa)). Disordered stretches follow at residues 363–434 (NKTS…NIPS) and 469–506 (KISL…EDQI). Basic and acidic residues predominate over residues 377–388 (YQREYNKNERND). Over residues 389 to 401 (LSTSFENDYYPSS) the composition is skewed to polar residues. Residues 402-417 (SERKEKFENDYQEKTP) show a composition bias toward basic and acidic residues. A compositionally biased stretch (low complexity) spans 473-498 (DSAQSSRSTSYSPRPTDSCFSSSSDL).

As to quaternary structure, interacts with MSH5. Interacts with TEX11.

It is found in the chromosome. In terms of biological role, involved in recombination, probably acting by stabilizing recombination intermediates during meiotic crossover formation. Required for normal germline development and fertility. Required for meiotic progression, complete chromosomal synapsis and crossover formation. Binds double-stranded DNA. However, also binds branched DNA molecules, such as those containing a D-loop or Holliday junction structure. Probably not required for formation of DNA double-strand breaks (DSBs). Also binds RNA in an RNA structure-independent manner, with a preference for binding 3'-UTR regions of mRNAs; may stabilize bound RNAs. In Homo sapiens (Human), this protein is Regulator of DNA class I crossover intermediates 1.